Here is a 343-residue protein sequence, read N- to C-terminus: Phosphate acyltransferase (343 aa).

Belongs to the PlsX family. As to quaternary structure, homodimer. Probably interacts with PlsY.

It is found in the cytoplasm. It catalyses the reaction a fatty acyl-[ACP] + phosphate = an acyl phosphate + holo-[ACP]. It functions in the pathway lipid metabolism; phospholipid metabolism. In terms of biological role, catalyzes the reversible formation of acyl-phosphate (acyl-PO(4)) from acyl-[acyl-carrier-protein] (acyl-ACP). This enzyme utilizes acyl-ACP as fatty acyl donor, but not acyl-CoA. The polypeptide is Phosphate acyltransferase (Haemophilus ducreyi (strain 35000HP / ATCC 700724)).